The sequence spans 448 residues: Iroquois-class homeodomain protein irx-3 (448 aa).

The homeobox; TALE-type DNA-binding region spans 108 to 170 (DPSRPKNATR…NARRRLKKEN (63 aa)). Disordered stretches follow at residues 171 to 250 (KMTW…NAPE) and 387 to 410 (SGTA…DRSS). Acidic residues predominate over residues 195–222 (KHEDDEEIDLENIDTEDIESKEDLDDPD). Residues 223-237 (TDIHSDSKTDARSDS) are compositionally biased toward basic and acidic residues. The segment covering 238–248 (EASDGFEDLNA) has biased composition (acidic residues). The span at 396-406 (AEPKHSTDSLT) shows a compositional bias: basic and acidic residues.

Belongs to the TALE/IRO homeobox family. Expressed in the neural plate in overlapping patterns with other irx members, which all share an anterior border of expression. Outside the nervous system and at tailbud stages, expressed in the developing otic vesicle, branchial arches, prospective heart region and pronephros.

It is found in the nucleus. In terms of biological role, acts partially redundantly with other irx members in neural patterning. Required for formation of the posterior forebrain, midbrain, hindbrain, and to a lesser extent, spinal cord. Both up-regulates and down-regulates gene expression during neural development. Acts early in neural plate development to induce proneural gene expression and specify a neural precursor state. Also up-regulates repressors that prevent neuronal differentiation. Required during at least two stages of pronephros kidney development; during neurula stages, maintains transcription of key renal genes to define the size and identity of the pronephric anlage, probably in part through regulation of bmp-signaling. Subsequently required for proper formation of the intermediate tubule segment of the pronephros. The protein is Iroquois-class homeodomain protein irx-3 of Xenopus tropicalis (Western clawed frog).